A 195-amino-acid polypeptide reads, in one-letter code: UPF0314 protein RL4541 (195 aa).

4 helical membrane-spanning segments follow: residues 15-35 (FWFV…YMMG), 64-84 (WYTP…HLIL), 127-147 (GDSI…FFFA), and 150-170 (APVA…GYII).

It belongs to the UPF0314 family.

It localises to the cell membrane. This Rhizobium johnstonii (strain DSM 114642 / LMG 32736 / 3841) (Rhizobium leguminosarum bv. viciae) protein is UPF0314 protein RL4541.